The primary structure comprises 355 residues: DNA polymerase IV (355 aa).

The 182-residue stretch at 4–185 (IIHVDMDCFY…LPLKKIPGVG (182 aa)) folds into the UmuC domain. Mg(2+) contacts are provided by aspartate 8 and aspartate 103. Residue glutamate 104 is part of the active site.

This sequence belongs to the DNA polymerase type-Y family. Monomer. Mg(2+) serves as cofactor.

The protein localises to the cytoplasm. The catalysed reaction is DNA(n) + a 2'-deoxyribonucleoside 5'-triphosphate = DNA(n+1) + diphosphate. In terms of biological role, poorly processive, error-prone DNA polymerase involved in untargeted mutagenesis. Copies undamaged DNA at stalled replication forks, which arise in vivo from mismatched or misaligned primer ends. These misaligned primers can be extended by PolIV. Exhibits no 3'-5' exonuclease (proofreading) activity. May be involved in translesional synthesis, in conjunction with the beta clamp from PolIII. In Pasteurella multocida (strain Pm70), this protein is DNA polymerase IV.